Reading from the N-terminus, the 302-residue chain is Glycine--tRNA ligase alpha subunit (302 aa).

The protein belongs to the class-II aminoacyl-tRNA synthetase family. In terms of assembly, tetramer of two alpha and two beta subunits.

The protein resides in the cytoplasm. It carries out the reaction tRNA(Gly) + glycine + ATP = glycyl-tRNA(Gly) + AMP + diphosphate. This Xanthomonas campestris pv. campestris (strain 8004) protein is Glycine--tRNA ligase alpha subunit.